A 226-amino-acid polypeptide reads, in one-letter code: dITP/XTP pyrophosphatase (226 aa).

14–19 (TGNKDK) contributes to the substrate binding site. Glutamate 49 and aspartate 83 together coordinate Mg(2+). Aspartate 83 functions as the Proton acceptor in the catalytic mechanism. Substrate contacts are provided by residues threonine 84, 176-179 (FGYD), lysine 199, and 204-205 (HR).

This sequence belongs to the HAM1 NTPase family. In terms of assembly, homodimer. Requires Mg(2+) as cofactor.

It carries out the reaction XTP + H2O = XMP + diphosphate + H(+). The catalysed reaction is dITP + H2O = dIMP + diphosphate + H(+). It catalyses the reaction ITP + H2O = IMP + diphosphate + H(+). Functionally, pyrophosphatase that catalyzes the hydrolysis of nucleoside triphosphates to their monophosphate derivatives, with a high preference for the non-canonical purine nucleotides XTP (xanthosine triphosphate), dITP (deoxyinosine triphosphate) and ITP. Seems to function as a house-cleaning enzyme that removes non-canonical purine nucleotides from the nucleotide pool, thus preventing their incorporation into DNA/RNA and avoiding chromosomal lesions. In Chlorobaculum tepidum (strain ATCC 49652 / DSM 12025 / NBRC 103806 / TLS) (Chlorobium tepidum), this protein is dITP/XTP pyrophosphatase.